The primary structure comprises 491 residues: Serralysin (491 aa).

A propeptide spanning residues 1–16 (MGSFLLKKAVGLSNIS) is cleaved from the precursor. His186 serves as a coordination point for Zn(2+). The active site involves Glu187. Zn(2+) is bound by residues His190, His196, and Tyr226. Arg263, Gly265, Asp295, Gly297, Gly298, Asp300, Thr337, Glu339, Gly344, Gly346, Asp348, Asn353, Ala355, Asn357, Gly361, Gly362, Gly364, Asp366, Gly370, Gly373, Asp384, Gly388, Gly389, Gly391, Asp402, Asp409, and Asp419 together coordinate Ca(2+). Hemolysin-type calcium-binding repeat units follow at residues 342-359 (IGGF…DNTL), 360-377 (IGGE…NNTI), and 378-395 (YGGR…SNTF).

Belongs to the peptidase M10B family. The cofactor is Ca(2+). Zn(2+) serves as cofactor.

It is found in the secreted. It catalyses the reaction Preferential cleavage of bonds with hydrophobic residues in P1'.. Ca(2+) increases protease activity. Its function is as follows. One of the virulence factors produced during swarmer cell differentiation of the bacteria, which seems to be associated with pathogenesis. The protease activity is limited to IgA1, IgA2, as well as IgG degradation. In Proteus mirabilis, this protein is Serralysin (zapA).